A 217-amino-acid chain; its full sequence is Uracil-DNA glycosylase (217 aa).

D62 acts as the Proton acceptor in catalysis.

Belongs to the uracil-DNA glycosylase (UDG) superfamily. UNG family.

It localises to the cytoplasm. The catalysed reaction is Hydrolyzes single-stranded DNA or mismatched double-stranded DNA and polynucleotides, releasing free uracil.. In terms of biological role, excises uracil residues from the DNA which can arise as a result of misincorporation of dUMP residues by DNA polymerase or due to deamination of cytosine. The sequence is that of Uracil-DNA glycosylase from Streptococcus pyogenes serotype M18 (strain MGAS8232).